A 739-amino-acid chain; its full sequence is Gamma-tubulin complex component 4 homolog (739 aa).

This sequence belongs to the TUBGCP family.

The protein resides in the cytoplasm. Its subcellular location is the cytoskeleton. It is found in the microtubule organizing center. Functionally, gamma-tubulin complex is necessary for microtubule nucleation at the microtubule organizing centers (MTOCs). The polypeptide is Gamma-tubulin complex component 4 homolog (85P) (Medicago truncatula (Barrel medic)).